Here is a 735-residue protein sequence, read N- to C-terminus: MSKGLYDIPSWATTETRTLAKLAGVERLFEPQYMALQAGVEKGENLVVAAPTGSGKTFIALVAIVNSLARAGGRAFYLVPLKSVAYEKYTSFSILSRMGLKLKISVGDFREGPPEAPVVIATYEKFDSLLRVSPSLARNVSVLIVDEIHSVSDPKRGPILESIVSRMLASAGEAQLVGLSATVPNAGEIAEWIGGKIVESSWRPVPLREYVFKEYKLYSPTGGLREVPRVYGLYDLDLAAEAIEDGGQALVFTYSRRRAVTLAKRAAKRLGRRLSSREARVYSAEASRAEGAPRSVAEELASLIAAGIAYHHAGLPPSLRKTVEEAFRAGAVKVVYSTPTLAAGVNLPARRVVIDSYYRYEAGFREPIRVAEYKQMAGRAGRPGLDEFGEAIIVAERLDRPEDLISGYIRAPPERVESRLAGLRGLRHFILGIVAPEGEVSIGSIEKVSGLTLYSLQRGLPRETIARAVEDLSAWGLVEVKGWRIAATSLGREVAAVYLDPESVPVFREEVKHLSFDNEFDILYLISTMPDMVRLPATRREEERLLEAILDASPRMLSSVDWLGPEEMAAVKTAVVLKLWIDEASEDTIYGEWGVHTGDLLNMVSTAEWIASGLSRIAPYLGLNSKVSHILSVIARRIKHGVKPELLQLVEIPGVGRVRARILFEAGYRSIEDLATARAEDLMRLPLIGPSTARQILEFLGRVDEAREAEAREMLARKGLLSYLEGDAVAGEEGE.

ATP-binding positions include glutamine 32 and 50 to 57 (APTGSGKT). The 165-residue stretch at 37–201 (QAGVEKGENL…WIGGKIVESS (165 aa)) folds into the Helicase ATP-binding domain. A DEAH box motif is present at residues 146 to 149 (DEIH). One can recognise a Helicase C-terminal domain in the interval 235-431 (DLDLAAEAIE…GLRGLRHFIL (197 aa)).

The protein belongs to the helicase family. Hel308 subfamily. As to quaternary structure, monomer.

It carries out the reaction Couples ATP hydrolysis with the unwinding of duplex DNA by translocating in the 3'-5' direction.. The enzyme catalyses ATP + H2O = ADP + phosphate + H(+). DNA-dependent ATPase and 3'-5' DNA helicase that may be involved in repair of stalled replication forks. The sequence is that of ATP-dependent DNA helicase Hel308 from Aeropyrum pernix (strain ATCC 700893 / DSM 11879 / JCM 9820 / NBRC 100138 / K1).